The sequence spans 204 residues: MMVPDANTLNVSRETFERLKIFADLVHKWNPRINLVSKRSLEDLWTRHIIDSIQVFRNAPKGDLWVDLGSGGGFPGLICAILAAEEKPETQFICVESDQRKSAFLRSAARECGIACQVISERIEHLDPLDADILSARALTDLTGLLGFAERHLKIGGTALFPKGAAWKKELQDAAKQWNFSYDAVTSLTEPQAVLLKITGVTRV.

S-adenosyl-L-methionine contacts are provided by residues Gly-69, Phe-74, 123 to 124, and Arg-137; that span reads IE.

This sequence belongs to the methyltransferase superfamily. RNA methyltransferase RsmG family.

It localises to the cytoplasm. The catalysed reaction is guanosine(527) in 16S rRNA + S-adenosyl-L-methionine = N(7)-methylguanosine(527) in 16S rRNA + S-adenosyl-L-homocysteine. Functionally, specifically methylates the N7 position of guanine in position 527 of 16S rRNA. In Ruegeria pomeroyi (strain ATCC 700808 / DSM 15171 / DSS-3) (Silicibacter pomeroyi), this protein is Ribosomal RNA small subunit methyltransferase G.